Consider the following 359-residue polypeptide: 3-dehydroquinate synthase (359 aa).

It belongs to the archaeal-type DHQ synthase family.

It carries out the reaction 2-amino-2,3,7-trideoxy-D-lyxo-hept-6-ulosonate + NAD(+) + H2O = 3-dehydroquinate + NH4(+) + NADH + H(+). Functionally, catalyzes the oxidative deamination and cyclization of 2-amino-3,7-dideoxy-D-threo-hept-6-ulosonic acid (ADH) to yield 3-dehydroquinate (DHQ), which is fed into the canonical shikimic pathway of aromatic amino acid biosynthesis. This Methanosphaera stadtmanae (strain ATCC 43021 / DSM 3091 / JCM 11832 / MCB-3) protein is 3-dehydroquinate synthase.